The chain runs to 501 residues: V-type proton ATPase subunit B 2 (501 aa).

An ATP-binding site is contributed by Arg392.

This sequence belongs to the ATPase alpha/beta chains family. V-ATPase is a heteromultimeric enzyme made up of two complexes: the ATP-hydrolytic V1 complex and the proton translocation V0 complex. The V1 complex consists of three catalytic AB heterodimers that form a heterohexamer, three peripheral stalks each consisting of EG heterodimers, one central rotor including subunits D and F, and the regulatory subunits C and H. The proton translocation complex V0 consists of the proton transport subunit a, a ring of proteolipid subunits c9c'', rotary subunit d, subunits e and f, and the accessory subunits vah-19/Ac45 and vah-20/PRR. In terms of tissue distribution, predominantly expressed in male and hermaphrodite testis (at protein level).

It localises to the cytoplasm. Functionally, non-catalytic subunit of the V1 complex of vacuolar(H+)-ATPase (V-ATPase), a multisubunit enzyme composed of a peripheral complex (V1) that hydrolyzes ATP and a membrane integral complex (V0) that translocates protons. V-ATPase is responsible for acidifying and maintaining the pH of intracellular compartments and in some cell types, is targeted to the plasma membrane, where it is responsible for acidifying the extracellular environment. In neurons, required for necrotic cell death probably by promoting intracellular acidification. Required for spermatogenesis where it regulates the fibrous body-membranous organelle (FBMO) morphology in spermatocytes and the acidification of FBMO-derived secretory membranous organelles (MOs) as spermatids mature. In Caenorhabditis elegans, this protein is V-type proton ATPase subunit B 2.